The chain runs to 393 residues: G protein-activated inward rectifier potassium channel 3 (393 aa).

A disordered region spans residues M1–R23. The Cytoplasmic segment spans residues M1 to W57. The helical transmembrane segment at R58 to I82 threads the bilayer. The Extracellular portion of the chain corresponds to A83 to G106. An intramembrane region (helical; Pore-forming) is located at residues F107–E118. The pore-forming intramembrane region spans T119–H125. A Selectivity filter motif is present at residues T120–H125. Topologically, residues R126–E134 are extracellular. A helical transmembrane segment spans residues G135–C156. Residues M157–V393 are Cytoplasmic-facing. Positions K360–V393 are disordered. The span at L384 to V393 shows a compositional bias: pro residues. Positions E390–V393 match the PDZ-binding motif.

Belongs to the inward rectifier-type potassium channel (TC 1.A.2.1) family. KCNJ9 subfamily. As to quaternary structure, associates with KCNJ3/GIRK1 to form a G-protein-activated heteromultimer pore-forming unit. Interacts (via PDZ-binding motif) with SNX27 (via PDZ domain); the interaction is required when endocytosed to prevent degradation in lysosomes and promote recycling to the plasma membrane. In terms of tissue distribution, expressed mainly in the brain, some expression in the skeletal muscle.

The protein resides in the membrane. It carries out the reaction K(+)(in) = K(+)(out). Its function is as follows. Inward rectifier potassium channels are characterized by a greater tendency to allow potassium to flow into the cell rather than out of it. Their voltage dependence is regulated by the concentration of extracellular potassium; as external potassium is raised, the voltage range of the channel opening shifts to more positive voltages. The inward rectification is mainly due to the blockage of outward current by internal magnesium. This receptor is controlled by G proteins. Unable to produce channel activity when expressed alone. Forms a functional channel in association with KCNJ3/GIRK1. In Mus musculus (Mouse), this protein is G protein-activated inward rectifier potassium channel 3 (Kcnj9).